The sequence spans 124 residues: Max-like protein 1 (124 aa).

Residues 1–10 are compositionally biased toward acidic residues; the sequence is MSDMSDLEDD. The segment at 1–44 is disordered; it reads MSDMSDLEDDQTGHCGSGEHSGPFDPKRHAREQHNALERRRRDN. The tract at residues 29–42 is basic motif; it reads HAREQHNALERRRR. In terms of domain architecture, bHLH spans 29-82; that stretch reads HAREQHNALERRRRDNIKDMYTSLREVVPDANGERVQASRAVILKKAIESIEKG. Residues 32-44 are compositionally biased toward basic and acidic residues; sequence EQHNALERRRRDN. Residues 43-82 form a helix-loop-helix motif region; the sequence is DNIKDMYTSLREVVPDANGERVQASRAVILKKAIESIEKG. Residues 86 to 113 are a coiled coil; sequence SATLSVDVAEQESKNAKLREEIARLKAK.

Belongs to the MAX family. In terms of assembly, heterodimer with mdl-1 in presence and absence of DNA. Interacts with tdpt-1; the interaction promotes axon regeneration after injury. Expressed in D-type motor neurons.

Its subcellular location is the nucleus. Functionally, transcriptional regulator which binds to the E box motif 5'-CACGTG-3', when in a heterodimeric complex with mdl-1. Involved in the control of lifespan in response to dietary restriction, the decline in protein homeostasis associated with normal aging and may overlap with the insulin-like signaling pathway. Involved in promoting infection by the microsporidian pathogen N.parisii. Required for the expression of svh-2 and the promotion of axon regeneration after injury. The sequence is that of Max-like protein 1 from Caenorhabditis elegans.